The sequence spans 78 residues: MFTLKKSLLLLFFLGTISLSVCKQERDADYEDKGEVEEVKRGIFSLIKGAAKLITKTVAKEAGKTGLELMACKVTNQC.

The signal sequence occupies residues 1–22 (MFTLKKSLLLLFFLGTISLSVC). The propeptide at 23-39 (KQERDADYEDKGEVEEV) is removed in mature form. The cysteines at positions 72 and 78 are disulfide-linked.

Expressed by the skin glands.

Its subcellular location is the secreted. In terms of biological role, has antimicrobial activity against Gram-negative bacterium E.coli ATCC 8739 (MIC=12.5 ug), against Gram positive bacteria S.aureus ATCC 6538 (MIC=3.1 ug), methicillin-resistant S.aureus ATCC 43300 (MIC=25 ug), B.subtilis ATCC 6633 (MIC=6.3 ug) and against fungus C.albicans ATCC 90028 (MIC=100 ug). This is Esculentin-2ISa from Odorrana ishikawae (Ishikawa's frog).